The chain runs to 323 residues: Aquaporin-4 (323 aa).

Residues 1-36 (MSDRPTARRWGKCGPLCTRENIMVAFKGVWTQAFWK) are Cytoplasmic-facing. S-palmitoyl cysteine attachment occurs at residues C13 and C17. A helical transmembrane segment spans residues 37–57 (AVTAEFLAMLIFVLLSLGSTI). Residues 58–69 (NWGGTEKPLPVD) lie on the Extracellular side of the membrane. The helical transmembrane segment at 70–89 (MVLISLCFGLSIATMVQCFG) threads the bilayer. Over 90–93 (HISG) the chain is Cytoplasmic. An intramembrane region (discontinuously helical) is located at residues 94 to 101 (GHINPAVT). The NPA 1 motif lies at 97-99 (NPA). Topologically, residues 102–115 (VAMVCTRKISIAKS) are cytoplasmic. Phosphoserine; by PKG is present on S111. The helical transmembrane segment at 116 to 136 (VFYIAAQCLGAIIGAGILYLV) threads the bilayer. The Extracellular segment spans residues 137–155 (TPPSVVGGLGVTMVHGNLT). N153 carries an N-linked (GlcNAc...) asparagine glycan. A helical transmembrane segment spans residues 156-176 (AGHGLLVELIITFQLVFTIFA). At 177 to 184 (SCDSKRTD) the chain is on the cytoplasmic side. S180 is modified (phosphoserine; by PKC). The chain crosses the membrane as a helical span at residues 185–205 (VTGSIALAIGFSVAIGHLFAI). N-linked (GlcNAc...) asparagine glycosylation occurs at N206. The Extracellular segment spans residues 206–208 (NYT). Residues 209 to 222 (GASMNPARSFGPAV) constitute an intramembrane region (discontinuously helical). The NPA 2 signature appears at 213-215 (NPA). The Extracellular portion of the chain corresponds to 223–231 (IMGNWENHW). The chain crosses the membrane as a helical span at residues 232-252 (IYWVGPIIGAVLAGGLYEYVF). At 253-323 (CPDVEFKRRF…DQSGEVLSSV (71 aa)) the chain is on the cytoplasmic side. Residues S276 and S285 each carry the phosphoserine modification. T289 carries the phosphothreonine modification. S321 is modified (phosphoserine).

The protein belongs to the MIP/aquaporin (TC 1.A.8) family. Homotetramer. The tetramers can form oligomeric arrays in membranes. The size of the oligomers differs between tissues and is smaller in skeletal muscle than in brain. Interaction between AQP4 oligomeric arrays in close-by cells can contribute to cell-cell adhesion. Part of a complex containing MLC1, TRPV4, HEPACAM and ATP1B1. Post-translationally, phosphorylation by PKC at Ser-180 reduces conductance by 50%. Phosphorylation by PKG at Ser-111 in response to glutamate increases conductance by 40%. In terms of processing, isoform 2: Palmitoylated on its N-terminal region. Isoform 1: Not palmitoylated. Detected in skeletal muscle. Detected in stomach, along the glandular base region of the fundic gland (at protein level). Detected in brain, lung and skeletal muscle, and at much lower levels in heart and ovary.

Its subcellular location is the cell membrane. It localises to the basolateral cell membrane. The protein resides in the endosome membrane. It is found in the sarcolemma. The protein localises to the cell projection. It carries out the reaction H2O(in) = H2O(out). In terms of biological role, forms a water-specific channel. Plays an important role in brain water homeostasis. It is involved in glymphatic solute transport and is required for a normal rate of water exchange across the blood brain interface. Required for normal levels of cerebrospinal fluid influx into the brain cortex and parenchyma along paravascular spaces that surround penetrating arteries, and for normal drainage of interstitial fluid along paravenous drainage pathways. Thereby, it is required for normal clearance of solutes from the brain interstitial fluid, including soluble beta-amyloid peptides derived from APP. Plays a redundant role in urinary water homeostasis and urinary concentrating ability. The protein is Aquaporin-4 (AQP4) of Homo sapiens (Human).